Consider the following 1292-residue polypeptide: Myosin-1 (1292 aa).

Residues 35–714 (VGVSDLTLLS…TLFALENMRD (680 aa)) form the Myosin motor domain. Residue 128–135 (GESGAGKT) coordinates ATP. At serine 356 the chain carries Phosphoserine. The tract at residues 403–485 (SIGILDIYGF…PGIFAALNDS (83 aa)) is actin-binding. 2 IQ domains span residues 718–738 (HNMA…RIDS) and 739–764 (AIRI…YGNK). The 191-residue stretch at 770–960 (KERRAMSLLG…TIMVRRGRPG (191 aa)) folds into the TH1 domain. Disordered regions lie at residues 956 to 991 (RGRP…GHPT), 1017 to 1180 (YSLN…FPLK), and 1227 to 1258 (PVAS…SAAT). Residues 1062–1081 (MDNSSAAYGNASALPNSAPS) show a composition bias toward polar residues. Composition is skewed to pro residues over residues 1087-1121 (ASRP…PMPR) and 1142-1155 (APPP…PPAA). An SH3 domain is found at 1157-1219 (PSEPVYEAAF…PTAYIVESKA (63 aa)). A compositionally biased stretch (low complexity) spans 1240 to 1258 (ATREAGTTSAATAAASAAT).

Belongs to the TRAFAC class myosin-kinesin ATPase superfamily. Myosin family. In terms of processing, phosphorylation of the TEDS site (Ser-356) is required for the polarization of the actin cytoskeleton. Phosphorylation probably activates the myosin-I ATPase activity.

It localises to the cytoplasm. The protein resides in the cytoskeleton. Its subcellular location is the actin patch. In terms of biological role, type-I myosin implicated in the organization of the actin cytoskeleton. Required for proper actin cytoskeleton polarization. At the cell cortex, assembles in patch-like structures together with proteins from the actin-polymerizing machinery and promotes actin assembly. Functions as actin nucleation-promoting factor (NPF) for the Arp2/3 complex. This Eremothecium gossypii (strain ATCC 10895 / CBS 109.51 / FGSC 9923 / NRRL Y-1056) (Yeast) protein is Myosin-1 (MYO1).